We begin with the raw amino-acid sequence, 317 residues long: Malate dehydrogenase (317 aa).

NAD(+) is bound by residues 7 to 13 and D34; that span reads GAAGGIG. Residues R81 and R87 each coordinate substrate. NAD(+) is bound by residues N94 and 117 to 119; that span reads VTN. Substrate-binding residues include N119 and R153. H177 serves as the catalytic Proton acceptor. M231 serves as a coordination point for NAD(+).

Belongs to the LDH/MDH superfamily. MDH type 1 family. In terms of assembly, homodimer.

It catalyses the reaction (S)-malate + NAD(+) = oxaloacetate + NADH + H(+). Functionally, catalyzes the reversible oxidation of malate to oxaloacetate. This chain is Malate dehydrogenase, found in Actinobacillus pleuropneumoniae serotype 7 (strain AP76).